The primary structure comprises 277 residues: Ras suppressor protein 1 (277 aa).

Positions 1–24 are disordered; it reads MSKSLKKLVEESREKNQPEVDMSD. Serine 2 is modified (N-acetylserine). Over residues 7–24 the composition is skewed to basic and acidic residues; it reads KLVEESREKNQPEVDMSD. LRR repeat units lie at residues 41 to 63, 64 to 85, 87 to 109, 110 to 133, 135 to 156, 158 to 179, and 181 to 202; these read HITQ…AELK, NLEV…ISSL, KLKH…GSLP, ALEV…FFYL, TLRA…IGKL, KLQI…IGEL, and QLKE…LGNL. The disordered stretch occupies residues 250–277; the sequence is MQANPEPPKKNNDKSKKISRKPLAAKNR. The segment covering 256 to 265 has biased composition (basic and acidic residues); sequence PPKKNNDKSK.

Its function is as follows. Potentially plays a role in the Ras signal transduction pathway. Capable of suppressing v-Ras transformation in vitro. The polypeptide is Ras suppressor protein 1 (RSU1) (Homo sapiens (Human)).